Reading from the N-terminus, the 524-residue chain is GMP synthase [glutamine-hydrolyzing] (524 aa).

The region spanning 10 to 199 (PVLVVDFGAQ…LTEVAGLEQT (190 aa)) is the Glutamine amidotransferase type-1 domain. The Nucleophile role is filled by Cys-87. Residues His-173 and Glu-175 contribute to the active site. The 199-residue stretch at 200 to 398 (WTSANIAQQL…LGLPEEIVAR (199 aa)) folds into the GMPS ATP-PPase domain. 228-234 (SGGVDSA) serves as a coordination point for ATP.

In terms of assembly, homodimer.

It catalyses the reaction XMP + L-glutamine + ATP + H2O = GMP + L-glutamate + AMP + diphosphate + 2 H(+). Its pathway is purine metabolism; GMP biosynthesis; GMP from XMP (L-Gln route): step 1/1. Catalyzes the synthesis of GMP from XMP. This is GMP synthase [glutamine-hydrolyzing] (guaA) from Corynebacterium ammoniagenes (Brevibacterium ammoniagenes).